The sequence spans 205 residues: Thymidine kinase (205 aa).

ATP contacts are provided by residues 9-16 and 87-90; these read SAMNAGKS and DECQ. The active-site Proton acceptor is Glu-88. Zn(2+) contacts are provided by Cys-145, Cys-147, Cys-182, and His-185.

It belongs to the thymidine kinase family. In terms of assembly, homotetramer.

It is found in the cytoplasm. The catalysed reaction is thymidine + ATP = dTMP + ADP + H(+). The polypeptide is Thymidine kinase (Shigella dysenteriae serotype 1 (strain Sd197)).